Consider the following 587-residue polypeptide: Proteasome-associated ATPase (587 aa).

The stretch at 9 to 94 forms a coiled coil; that stretch reads ARKAQHDAEI…KEEVDRLAQP (86 aa). 276 to 281 is a binding site for ATP; it reads GCGKTL. The segment at 586–587 is docks into pockets in the proteasome alpha-ring; it reads YL.

It belongs to the AAA ATPase family. As to quaternary structure, homohexamer. Assembles into a hexameric ring structure that caps the 20S proteasome core. Strongly interacts with the prokaryotic ubiquitin-like protein Pup through a hydrophobic interface; the interacting region of ARC lies in its N-terminal coiled-coil domain. There is one Pup binding site per ARC hexamer ring. Upon ATP-binding, the C-terminus of ARC interacts with the alpha-rings of the proteasome core, possibly by binding to the intersubunit pockets.

It participates in protein degradation; proteasomal Pup-dependent pathway. Its function is as follows. ATPase which is responsible for recognizing, binding, unfolding and translocation of pupylated proteins into the bacterial 20S proteasome core particle. May be essential for opening the gate of the 20S proteasome via an interaction with its C-terminus, thereby allowing substrate entry and access to the site of proteolysis. Thus, the C-termini of the proteasomal ATPase may function like a 'key in a lock' to induce gate opening and therefore regulate proteolysis. This is Proteasome-associated ATPase from Thermomonospora curvata (strain ATCC 19995 / DSM 43183 / JCM 3096 / KCTC 9072 / NBRC 15933 / NCIMB 10081 / Henssen B9).